The primary structure comprises 210 residues: Cell division protein FtsQ (210 aa).

Positions 1-58 constitute a POTRA domain; that stretch reads LQTSEIEVFQLLGLDGSTSLIALDIDAARRKLVQLPWVEDVDIRKVYPKTVEVRLKER. Residues 8 to 25 traverse the membrane as a helical segment; that stretch reads VFQLLGLDGSTSLIALDI.

Belongs to the FtsQ/DivIB family. FtsQ subfamily.

The protein resides in the cell inner membrane. In terms of biological role, essential cell division protein. The polypeptide is Cell division protein FtsQ (Rhizobium radiobacter (Agrobacterium tumefaciens)).